Reading from the N-terminus, the 239-residue chain is 4-hydroxy-tetrahydrodipicolinate reductase (239 aa).

NAD(+) is bound by residues Asp32, 73-75 (GTT), and 98-101 (ASNF). The active-site Proton donor/acceptor is the His133. Position 134 (His134) interacts with (S)-2,3,4,5-tetrahydrodipicolinate. Lys137 (proton donor) is an active-site residue. Position 143-144 (143-144 (GT)) interacts with (S)-2,3,4,5-tetrahydrodipicolinate.

It belongs to the DapB family.

The protein localises to the cytoplasm. The enzyme catalyses (S)-2,3,4,5-tetrahydrodipicolinate + NAD(+) + H2O = (2S,4S)-4-hydroxy-2,3,4,5-tetrahydrodipicolinate + NADH + H(+). It catalyses the reaction (S)-2,3,4,5-tetrahydrodipicolinate + NADP(+) + H2O = (2S,4S)-4-hydroxy-2,3,4,5-tetrahydrodipicolinate + NADPH + H(+). The protein operates within amino-acid biosynthesis; L-lysine biosynthesis via DAP pathway; (S)-tetrahydrodipicolinate from L-aspartate: step 4/4. In terms of biological role, catalyzes the conversion of 4-hydroxy-tetrahydrodipicolinate (HTPA) to tetrahydrodipicolinate. This Christiangramia forsetii (strain DSM 17595 / CGMCC 1.15422 / KT0803) (Gramella forsetii) protein is 4-hydroxy-tetrahydrodipicolinate reductase.